We begin with the raw amino-acid sequence, 186 residues long: Signal peptidase I (186 aa).

The Cytoplasmic portion of the chain corresponds to Met-1–Ala-19. The helical transmembrane segment at Ile-20–Val-40 threads the bilayer. At Glu-41–Asp-186 the chain is on the extracellular side. Catalysis depends on residues Ser-44 and Lys-86.

Belongs to the peptidase S26 family.

The protein resides in the cell membrane. It catalyses the reaction Cleavage of hydrophobic, N-terminal signal or leader sequences from secreted and periplasmic proteins.. The sequence is that of Signal peptidase I (lepB) from Bacillus licheniformis.